The primary structure comprises 314 residues: Dihydroorotate dehydrogenase (fumarate) (314 aa).

Substrate-binding positions include Lys46, 70–74 (NSMGL), and Asn130. 46–47 (KS) contributes to the FMN binding site. An FMN-binding site is contributed by Asn130. Catalysis depends on nucleophile residues Ser132 and Cys133. Lys167 and Ile195 together coordinate FMN. Residue 196 to 197 (NS) coordinates substrate. FMN is bound by residues Gly224, 252–253 (GG), and 274–275 (GT).

The protein belongs to the dihydroorotate dehydrogenase family. Type 1 subfamily. In terms of assembly, homodimer. It depends on FMN as a cofactor.

It localises to the cytoplasm. It carries out the reaction (S)-dihydroorotate + fumarate = orotate + succinate. The protein operates within pyrimidine metabolism; UMP biosynthesis via de novo pathway. In terms of biological role, catalyzes the conversion of dihydroorotate to orotate with fumarate as the electron acceptor. The protein is Dihydroorotate dehydrogenase (fumarate) (URA1) of Saccharomyces bayanus (Yeast).